A 271-amino-acid polypeptide reads, in one-letter code: Hematopoietically-expressed homeobox protein Hhex (271 aa).

The segment at 1 to 138 (MQFPHPGPAA…PFLQRPLHKR (138 aa)) is interaction with SOX13. S54 carries the post-translational modification Phosphoserine. The homeobox DNA-binding region spans 138 to 197 (RKGGQVRFSNDQTVELEKKFETQKYLSPPERKRLAKMLQLSERQVKTWFQNRRAKWRRLK). A required for WNT signaling induction region spans residues 138-271 (RKGGQVRFSN…EGDKGYFNAG (134 aa)). Residues 195–271 (RLKQENPQSN…EGDKGYFNAG (77 aa)) form a disordered region. The span at 212–242 (LDTSCEQGQDLPSEQNKGASLDRSQCSPSPA) shows a compositional bias: polar residues. Positions 245–261 (EDPDSEISEDSDQEVDI) are enriched in acidic residues.

As to quaternary structure, interacts with CD81; the interaction prevents nuclear translocation of HHEX. Interacts (via N-terminus) with SOX13; abolishes the SOX13-mediated inhibition of WNT-mediated transcriptional activity via competitive inhibition of the SOX13-TCF7 complex. Interacts with EIF4E; the interaction inhibits EIF4E-mediated mRNA nuclear export.

It is found in the nucleus. The protein resides in the nuclear body. It localises to the cytoplasm. Its function is as follows. Recognizes the DNA sequence 5'-ATTAA-3'. Transcriptional repressor. Activator of WNT-mediated transcription in conjunction with CTNNB1. Establishes anterior identity at two levels; acts early to enhance canonical WNT-signaling by repressing expression of TLE4, and acts later to inhibit NODAL-signaling by directly targeting NODAL. Inhibits EIF4E-mediated mRNA nuclear export. May play a role in hematopoietic differentiation. The chain is Hematopoietically-expressed homeobox protein Hhex (Hhex) from Mus musculus (Mouse).